Here is a 355-residue protein sequence, read N- to C-terminus: tRNA pseudouridine synthase D (355 aa).

Asp-84 (nucleophile) is an active-site residue. The TRUD domain maps to 160–306; that stretch reads GVPNYFGLQR…MAHERRILRL (147 aa).

Belongs to the pseudouridine synthase TruD family.

The catalysed reaction is uridine(13) in tRNA = pseudouridine(13) in tRNA. Functionally, responsible for synthesis of pseudouridine from uracil-13 in transfer RNAs. The protein is tRNA pseudouridine synthase D of Pseudomonas aeruginosa (strain LESB58).